The following is a 316-amino-acid chain: tRNA methyltransferase 10 homolog B (316 aa).

2 disordered regions span residues 1–30 (MDCE…RDDG) and 42–98 (VEYD…DLGN). The segment covering 63–82 (VQRKQRHWERIVSSKKSKRK) has biased composition (basic residues). The stretch at 75–96 (SSKKSKRKQERERRKIKRAEDL) forms a coiled coil. Basic and acidic residues predominate over residues 83-95 (QERERRKIKRAED). The SAM-dependent MTase TRM10-type domain maps to 113 to 310 (TKEKLLEAKH…KGVSPGKGYI (198 aa)).

The protein belongs to the class IV-like SAM-binding methyltransferase superfamily. TRM10 family.

The catalysed reaction is guanosine(9) in tRNA + S-adenosyl-L-methionine = N(1)-methylguanosine(9) in tRNA + S-adenosyl-L-homocysteine + H(+). In terms of biological role, S-adenosyl-L-methionine-dependent guanine N(1)-methyltransferase that catalyzes the formation of N(1)-methylguanine at position 9 (m1G9) in tRNAs. Probably not able to catalyze formation of N(1)-methyladenine at position 9 (m1A9) in tRNAs. In Rattus norvegicus (Rat), this protein is tRNA methyltransferase 10 homolog B (Trmt10b).